The following is a 660-amino-acid chain: Bifunctional polymyxin resistance protein ArnA (660 aa).

Residues methionine 1–leucine 304 form a formyltransferase ArnAFT region. Histidine 86–isoleucine 88 serves as a coordination point for (6R)-10-formyltetrahydrofolate. Histidine 104 acts as the Proton donor; for formyltransferase activity in catalysis. (6R)-10-formyltetrahydrofolate contacts are provided by residues arginine 114 and valine 136 to aspartate 140. A dehydrogenase ArnADH region spans residues arginine 314–serine 660. NAD(+) is bound by residues aspartate 347 and aspartate 368 to isoleucine 369. Residues alanine 393, tyrosine 398, and threonine 432 to serine 433 each bind UDP-alpha-D-glucuronate. The Proton acceptor; for decarboxylase activity role is filled by glutamate 434. UDP-alpha-D-glucuronate is bound by residues arginine 460, asparagine 492, lysine 526–arginine 535, and tyrosine 613. Arginine 619 (proton donor; for decarboxylase activity) is an active-site residue.

The protein in the N-terminal section; belongs to the Fmt family. UDP-L-Ara4N formyltransferase subfamily. This sequence in the C-terminal section; belongs to the NAD(P)-dependent epimerase/dehydratase family. UDP-glucuronic acid decarboxylase subfamily. Homohexamer, formed by a dimer of trimers.

The catalysed reaction is UDP-alpha-D-glucuronate + NAD(+) = UDP-beta-L-threo-pentopyranos-4-ulose + CO2 + NADH. It carries out the reaction UDP-4-amino-4-deoxy-beta-L-arabinose + (6R)-10-formyltetrahydrofolate = UDP-4-deoxy-4-formamido-beta-L-arabinose + (6S)-5,6,7,8-tetrahydrofolate + H(+). It functions in the pathway nucleotide-sugar biosynthesis; UDP-4-deoxy-4-formamido-beta-L-arabinose biosynthesis; UDP-4-deoxy-4-formamido-beta-L-arabinose from UDP-alpha-D-glucuronate: step 1/3. Its pathway is nucleotide-sugar biosynthesis; UDP-4-deoxy-4-formamido-beta-L-arabinose biosynthesis; UDP-4-deoxy-4-formamido-beta-L-arabinose from UDP-alpha-D-glucuronate: step 3/3. The protein operates within bacterial outer membrane biogenesis; lipopolysaccharide biosynthesis. Bifunctional enzyme that catalyzes the oxidative decarboxylation of UDP-glucuronic acid (UDP-GlcUA) to UDP-4-keto-arabinose (UDP-Ara4O) and the addition of a formyl group to UDP-4-amino-4-deoxy-L-arabinose (UDP-L-Ara4N) to form UDP-L-4-formamido-arabinose (UDP-L-Ara4FN). The modified arabinose is attached to lipid A and is required for resistance to polymyxin and cationic antimicrobial peptides. The polypeptide is Bifunctional polymyxin resistance protein ArnA (Escherichia coli (strain SMS-3-5 / SECEC)).